Here is a 204-residue protein sequence, read N- to C-terminus: Methylthioribulose-1-phosphate dehydratase (204 aa).

Zn(2+)-binding residues include H94 and H96.

The protein belongs to the aldolase class II family. MtnB subfamily. Zn(2+) serves as cofactor.

The enzyme catalyses 5-(methylsulfanyl)-D-ribulose 1-phosphate = 5-methylsulfanyl-2,3-dioxopentyl phosphate + H2O. The protein operates within amino-acid biosynthesis; L-methionine biosynthesis via salvage pathway; L-methionine from S-methyl-5-thio-alpha-D-ribose 1-phosphate: step 2/6. In terms of biological role, catalyzes the dehydration of methylthioribulose-1-phosphate (MTRu-1-P) into 2,3-diketo-5-methylthiopentyl-1-phosphate (DK-MTP-1-P). This Citrobacter koseri (strain ATCC BAA-895 / CDC 4225-83 / SGSC4696) protein is Methylthioribulose-1-phosphate dehydratase.